Reading from the N-terminus, the 145-residue chain is MPGVTVKDVNQQEFVRALAAFLKKSGKLKVPEWVDTVKLAKHKELAPYDENWFYTRAASTARHLYLRGGAGVGSMTKIYGGRQRNGVMPSHFSRGSKSVARRVLQALEGLKMVEKDQDWGRKLTPQGQRDLDRIAGQVAAAKKKH.

At Lys-23 the chain carries N6-acetyllysine. At Arg-67 the chain carries Omega-N-methylarginine. Residues Lys-111 and Lys-115 each carry the N6-acetyllysine modification. The residue at position 143 (Lys-143) is an N6-succinyllysine.

Belongs to the eukaryotic ribosomal protein eS19 family. In terms of assembly, component of the small ribosomal subunit. Part of the small subunit (SSU) processome, composed of more than 70 proteins and the RNA chaperone small nucleolar RNA (snoRNA) U3. Interacts with RPS19BP1; the interaction is direct and mediates the integration of RPS19 in state post-A1. Interacts with RPS19BP1.

The protein localises to the cytoplasm. It localises to the nucleus. It is found in the nucleolus. In terms of biological role, component of the small ribosomal subunit. The ribosome is a large ribonucleoprotein complex responsible for the synthesis of proteins in the cell. Required for pre-rRNA processing and maturation of 40S ribosomal subunits. Part of the small subunit (SSU) processome, first precursor of the small eukaryotic ribosomal subunit. During the assembly of the SSU processome in the nucleolus, many ribosome biogenesis factors, an RNA chaperone and ribosomal proteins associate with the nascent pre-rRNA and work in concert to generate RNA folding, modifications, rearrangements and cleavage as well as targeted degradation of pre-ribosomal RNA by the RNA exosome. This is Small ribosomal subunit protein eS19 (RPS19) from Oryctolagus cuniculus (Rabbit).